A 379-amino-acid chain; its full sequence is Alanine racemase (379 aa).

Catalysis depends on lysine 35, which acts as the Proton acceptor; specific for D-alanine. Residue lysine 35 is modified to N6-(pyridoxal phosphate)lysine. Arginine 133 is a substrate binding site. Catalysis depends on tyrosine 265, which acts as the Proton acceptor; specific for L-alanine. Methionine 312 serves as a coordination point for substrate.

It belongs to the alanine racemase family. Requires pyridoxal 5'-phosphate as cofactor.

The catalysed reaction is L-alanine = D-alanine. The protein operates within amino-acid biosynthesis; D-alanine biosynthesis; D-alanine from L-alanine: step 1/1. Functionally, catalyzes the interconversion of L-alanine and D-alanine. May also act on other amino acids. The chain is Alanine racemase (alr) from Treponema denticola (strain ATCC 35405 / DSM 14222 / CIP 103919 / JCM 8153 / KCTC 15104).